The sequence spans 208 residues: Cell death-inducing p53-target protein 1 (208 aa).

2 stretches are compositionally biased toward pro residues: residues 1–13 (MSSEPPPPYPGGP) and 36–67 (MQPPPGMPLPPADIGPPPYEPPGHPMPQPGFI). Residues 1 to 71 (MSSEPPPPYP…PQPGFIPPHM (71 aa)) form a disordered region. The LITAF domain maps to 122–206 (ATTVTVLQGE…CKAYIYTYKR (85 aa)). Positions 142 and 145 each coordinate Zn(2+). The membrane-binding amphipathic helix stretch occupies residues 164–184 (LGFFCCFMGCDLGCCLIPCLI). Zn(2+) contacts are provided by cysteine 194 and cysteine 197.

The protein belongs to the CDIP1/LITAF family. Highly expressed in brain. Expressed at lower level in heart, skeletal muscle, kidney, pancreas and liver. Weakly or not expressed in placenta and lung.

It is found in the late endosome membrane. The protein localises to the lysosome membrane. Acts as an important p53/TP53-apoptotic effector. Regulates TNF-alpha-mediated apoptosis in a p53/TP53-dependent manner. The sequence is that of Cell death-inducing p53-target protein 1 (CDIP1) from Homo sapiens (Human).